The sequence spans 423 residues: Enolase (423 aa).

Gln165 is a binding site for (2R)-2-phosphoglycerate. Catalysis depends on Glu209, which acts as the Proton donor. Residues Asp244, Glu285, and Asp310 each contribute to the Mg(2+) site. Positions 335, 364, 365, and 386 each coordinate (2R)-2-phosphoglycerate. Lys335 acts as the Proton acceptor in catalysis.

It belongs to the enolase family. In terms of assembly, homooctamer formed by a tetramer of dimers. Requires Mg(2+) as cofactor.

Its subcellular location is the cytoplasm. The protein localises to the secreted. It localises to the cell surface. The enzyme catalyses (2R)-2-phosphoglycerate = phosphoenolpyruvate + H2O. Its pathway is carbohydrate degradation; glycolysis; pyruvate from D-glyceraldehyde 3-phosphate: step 4/5. Its activity is regulated as follows. The covalent binding to the substrate causes inactivation of the enzyme, and possibly serves as a signal for the export of the protein. Its function is as follows. Catalyzes the reversible conversion of 2-phosphoglycerate (2-PG) into phosphoenolpyruvate (PEP). It is essential for the degradation of carbohydrates via glycolysis. The chain is Enolase from Methanocaldococcus jannaschii (strain ATCC 43067 / DSM 2661 / JAL-1 / JCM 10045 / NBRC 100440) (Methanococcus jannaschii).